Reading from the N-terminus, the 333-residue chain is DNA-directed RNA polymerase subunit alpha (333 aa).

Residues 1–233 are alpha N-terminal domain (alpha-NTD); sequence MVREKVKVST…NLFIPFLHVE (233 aa). Residues 267-333 form an alpha C-terminal domain (alpha-CTD) region; sequence LVFQYIFIDQ…LEKNRKFISN (67 aa).

It belongs to the RNA polymerase alpha chain family. In plastids the minimal PEP RNA polymerase catalytic core is composed of four subunits: alpha, beta, beta', and beta''. When a (nuclear-encoded) sigma factor is associated with the core the holoenzyme is formed, which can initiate transcription.

Its subcellular location is the plastid. The protein localises to the chloroplast. It catalyses the reaction RNA(n) + a ribonucleoside 5'-triphosphate = RNA(n+1) + diphosphate. Its function is as follows. DNA-dependent RNA polymerase catalyzes the transcription of DNA into RNA using the four ribonucleoside triphosphates as substrates. The sequence is that of DNA-directed RNA polymerase subunit alpha from Aethionema grandiflorum (Persian stone-cress).